Here is a 1342-residue protein sequence, read N- to C-terminus: DNA-directed RNA polymerase subunit beta (1342 aa).

This sequence belongs to the RNA polymerase beta chain family. The RNAP catalytic core consists of 2 alpha, 1 beta, 1 beta' and 1 omega subunit. When a sigma factor is associated with the core the holoenzyme is formed, which can initiate transcription.

It catalyses the reaction RNA(n) + a ribonucleoside 5'-triphosphate = RNA(n+1) + diphosphate. DNA-dependent RNA polymerase catalyzes the transcription of DNA into RNA using the four ribonucleoside triphosphates as substrates. In Cronobacter sakazakii (strain ATCC BAA-894) (Enterobacter sakazakii), this protein is DNA-directed RNA polymerase subunit beta.